The following is a 261-amino-acid chain: Carnitinyl-CoA dehydratase (261 aa).

Glutamate 111 serves as the catalytic Nucleophile. Glutamate 131 (proton acceptor) is an active-site residue.

Belongs to the enoyl-CoA hydratase/isomerase family.

The catalysed reaction is (R)-carnitinyl-CoA = crotonobetainyl-CoA + H2O. It participates in amine and polyamine metabolism; carnitine metabolism. Functionally, catalyzes the reversible dehydration of L-carnitinyl-CoA to crotonobetainyl-CoA. This is Carnitinyl-CoA dehydratase from Escherichia coli (strain SMS-3-5 / SECEC).